The chain runs to 112 residues: Large ribosomal subunit protein P1 (112 aa).

Residues 71–90 are compositionally biased toward low complexity; that stretch reads PAQAAAAAPAGGAPAAAAPA. A disordered region spans residues 71 to 112; it reads PAQAAAAAPAGGAPAAAAPAESKEGRRSQGESDDDMGFGLLD. A compositionally biased stretch (basic and acidic residues) spans 91–100; that stretch reads ESKEGRRSQG.

It belongs to the eukaryotic ribosomal protein P1/P2 family. P1 and P2 exist as dimers at the large ribosomal subunit.

Its function is as follows. Plays an important role in the elongation step of protein synthesis. This is Large ribosomal subunit protein P1 (rpl-21) from Oscheius tipulae.